The following is a 640-amino-acid chain: Chitin elicitor receptor kinase 1 (640 aa).

The first 31 residues, 1–31 (MKFQMKMKSELCRTYKYWLILLVLWLSGVTQ), serve as a signal peptide directing secretion. Residues 32-248 (RETGVLIVDA…GTVHWRSNVG (217 aa)) are Extracellular-facing. Disulfide bonds link Cys43/Cys104, Cys49/Cys166, and Cys102/Cys164. 3 LysM domains span residues 53–98 (AYYR…NIYL), 113–160 (FSYT…SLTI), and 179–227 (STYV…KAAN). Chitin is bound by residues 119–125 (TNDTAEK) and 148–154 (DLSSIYS). A helical transmembrane segment spans residues 249-269 (IIVGVVVGGIVLAVLLLFALI). The Cytoplasmic segment spans residues 270–640 (FGFKHFRRRK…SQPPSGNDQL (371 aa)). The segment at 286–308 (MQQSGLLSSSSMAGSKPSRSGST) is disordered. Positions 289 to 307 (SGLLSSSSMAGSKPSRSGS) are enriched in low complexity. One can recognise a Protein kinase domain in the interval 330-612 (FSLAKKIGQG…RFAVVQLMTL (283 aa)). ATP contacts are provided by residues 336–344 (IGQGGFASV) and Lys357. Asp452 acts as the Proton acceptor in catalysis.

Belongs to the protein kinase superfamily. Ser/Thr protein kinase family.

It is found in the cell membrane. The catalysed reaction is L-seryl-[protein] + ATP = O-phospho-L-seryl-[protein] + ADP + H(+). It carries out the reaction L-threonyl-[protein] + ATP = O-phospho-L-threonyl-[protein] + ADP + H(+). Lysin motif (LysM) receptor kinase required as a cell surface receptor for chitin elicitor (chitooligosaccharides) signaling leading to innate immunity in response to biotic stresses. The CERK1, MEKK1a/b, MKK1a/b/c and MPK4a/b proteins are involved in pathogen defense. The pathway induces rapid growth inhibition, cell wall depositions and accumulation of defense-related transcripts. This protein is required for response to chitin. Is able to complement the A.thaliana cerk1 mutant. This is Chitin elicitor receptor kinase 1 from Physcomitrium patens (Spreading-leaved earth moss).